The sequence spans 171 residues: Large ribosomal subunit protein uL10 (171 aa).

The protein belongs to the universal ribosomal protein uL10 family. Part of the ribosomal stalk of the 50S ribosomal subunit. The N-terminus interacts with L11 and the large rRNA to form the base of the stalk. The C-terminus forms an elongated spine to which L12 dimers bind in a sequential fashion forming a multimeric L10(L12)X complex.

Forms part of the ribosomal stalk, playing a central role in the interaction of the ribosome with GTP-bound translation factors. The chain is Large ribosomal subunit protein uL10 from Zymomonas mobilis subsp. mobilis (strain ATCC 31821 / ZM4 / CP4).